We begin with the raw amino-acid sequence, 159 residues long: Ribosomal RNA large subunit methyltransferase H (159 aa).

Residues leucine 76, glycine 108, and 127-132 (FSKMTF) contribute to the S-adenosyl-L-methionine site.

Belongs to the RNA methyltransferase RlmH family. Homodimer.

It localises to the cytoplasm. The enzyme catalyses pseudouridine(1915) in 23S rRNA + S-adenosyl-L-methionine = N(3)-methylpseudouridine(1915) in 23S rRNA + S-adenosyl-L-homocysteine + H(+). Its function is as follows. Specifically methylates the pseudouridine at position 1915 (m3Psi1915) in 23S rRNA. The protein is Ribosomal RNA large subunit methyltransferase H of Clostridium kluyveri (strain NBRC 12016).